The primary structure comprises 409 residues: FADH(2)-dependent resorcinol hydroxylase, oxygenase component (409 aa).

It belongs to the HpaH/HsaA monooxygenase family. As to quaternary structure, the FADH(2)-dependent resorcinol hydroxylase is composed of two subunits, GraA (the oxygenase component) and GraD (the reductase component). Both subunits are required for activity.

The enzyme catalyses resorcinol + FADH2 + O2 = benzene-1,2,4-triol + FAD + H2O + H(+). It participates in aromatic compound metabolism. Its function is as follows. Involved in the gamma-resorcylate (2,6-dihydroxybenzoate) catabolism. Oxygenase component of the resorcinol hydroxylase, which catalyzes the FADH(2)-dependent conversion of resorcinol to hydroxyquinol. The protein is FADH(2)-dependent resorcinol hydroxylase, oxygenase component of Rhizobium sp. (strain MTP-10005).